The chain runs to 351 residues: Transmembrane protein 185-like (351 aa).

8 helical membrane passes run 16 to 36 (LIYA…DGII), 41 to 61 (WAVF…ASVG), 81 to 101 (FKAM…EVLV), 113 to 133 (WLLV…ACVW), 154 to 174 (FIFI…VVCV), 178 to 198 (ILMS…VLFL), 212 to 232 (ITMA…EILL), and 244 to 264 (YVPV…TTFG).

The protein belongs to the TMEM185 family.

Its subcellular location is the membrane. The polypeptide is Transmembrane protein 185-like (Danio rerio (Zebrafish)).